We begin with the raw amino-acid sequence, 251 residues long: 3-dehydroquinate dehydratase (251 aa).

3-dehydroquinate contacts are provided by residues 47-49 (EWR) and R83. Catalysis depends on H144, which acts as the Proton donor/acceptor. K171 (schiff-base intermediate with substrate) is an active-site residue. Positions 214, 233, and 237 each coordinate 3-dehydroquinate.

It belongs to the type-I 3-dehydroquinase family. As to quaternary structure, homodimer.

The enzyme catalyses 3-dehydroquinate = 3-dehydroshikimate + H2O. The protein operates within metabolic intermediate biosynthesis; chorismate biosynthesis; chorismate from D-erythrose 4-phosphate and phosphoenolpyruvate: step 3/7. Its function is as follows. Involved in the third step of the chorismate pathway, which leads to the biosynthesis of aromatic amino acids. Catalyzes the cis-dehydration of 3-dehydroquinate (DHQ) and introduces the first double bond of the aromatic ring to yield 3-dehydroshikimate. The polypeptide is 3-dehydroquinate dehydratase (Klebsiella pneumoniae subsp. pneumoniae (strain ATCC 700721 / MGH 78578)).